Reading from the N-terminus, the 168-residue chain is Protein-export protein SecB (168 aa).

The span at 1–10 (MSDQGTNNGE) shows a compositional bias: polar residues. The interval 1-22 (MSDQGTNNGESGNGGAQNGEAP) is disordered.

It belongs to the SecB family. Homotetramer, a dimer of dimers. One homotetramer interacts with 1 SecA dimer.

Its subcellular location is the cytoplasm. Its function is as follows. One of the proteins required for the normal export of preproteins out of the cell cytoplasm. It is a molecular chaperone that binds to a subset of precursor proteins, maintaining them in a translocation-competent state. It also specifically binds to its receptor SecA. The polypeptide is Protein-export protein SecB (Parvibaculum lavamentivorans (strain DS-1 / DSM 13023 / NCIMB 13966)).